The following is a 271-amino-acid chain: High mobility group protein homolog TDP-1 (271 aa).

Residues 8–63 form the DEK-C domain; sequence GPLPTDIEETVITIMREEGVRYITAKILRMRLESKYQMEFGPHKAAIDDIVARAMQ. The disordered stretch occupies residues 75 to 118; it reads LKEKDASKSSGGKGSKRARSAGAEAPSKTKKEMTEKPKKPADYP. Residues 101-116 are compositionally biased toward basic and acidic residues; it reads SKTKKEMTEKPKKPAD. 2 consecutive DNA-binding regions (HMG box) follow at residues 118–186 and 206–270; these read PKPA…DEYK and PKRA…AALP.

The protein resides in the nucleus. In terms of biological role, unknown. May play a role in transcription and/or DNA replication. It is not known whether this protein is DNA sequence binding-specific or not. The sequence is that of High mobility group protein homolog TDP-1 from Trypanosoma brucei rhodesiense.